We begin with the raw amino-acid sequence, 277 residues long: Shikimate dehydrogenase (NADP(+)) (277 aa).

Residues 18 to 20 (SKS) and Thr-65 contribute to the shikimate site. The active-site Proton acceptor is the Lys-69. Glu-81 is a binding site for NADP(+). Positions 90 and 106 each coordinate shikimate. NADP(+)-binding positions include 130-134 (GAGGA), 154-159 (NRTFSK), and Met-217. Position 219 (Tyr-219) interacts with shikimate. Gly-241 is a binding site for NADP(+).

The protein belongs to the shikimate dehydrogenase family. In terms of assembly, homodimer.

The enzyme catalyses shikimate + NADP(+) = 3-dehydroshikimate + NADPH + H(+). Its pathway is metabolic intermediate biosynthesis; chorismate biosynthesis; chorismate from D-erythrose 4-phosphate and phosphoenolpyruvate: step 4/7. Functionally, involved in the biosynthesis of the chorismate, which leads to the biosynthesis of aromatic amino acids. Catalyzes the reversible NADPH linked reduction of 3-dehydroshikimate (DHSA) to yield shikimate (SA). In Vibrio parahaemolyticus serotype O3:K6 (strain RIMD 2210633), this protein is Shikimate dehydrogenase (NADP(+)).